We begin with the raw amino-acid sequence, 411 residues long: D-galactonate dehydratase family member SBI_01856 (411 aa).

Residues Asn-45 and His-130 each contribute to the substrate site. Catalysis depends on Tyr-167, which acts as the Proton donor/acceptor. Residue Asp-219 coordinates Mg(2+). Catalysis depends on His-221, which acts as the Proton donor/acceptor. Positions 245 and 271 each coordinate Mg(2+). The substrate site is built by Glu-271, Arg-292, His-321, Asp-325, and Glu-348.

The protein belongs to the mandelate racemase/muconate lactonizing enzyme family. GalD subfamily. Requires Mg(2+) as cofactor.

The catalysed reaction is D-gluconate = 2-dehydro-3-deoxy-D-gluconate + H2O. Has low D-gluconate dehydratase activity (in vitro), suggesting that it has no significant role in D-gluconate degradation in vivo. Has no detectable activity with a panel of 70 other acid sugars (in vitro). This is D-galactonate dehydratase family member SBI_01856 from Streptomyces bingchenggensis (strain BCW-1).